The chain runs to 171 residues: 3-hydroxydecanoyl-[acyl-carrier-protein] dehydratase (171 aa).

His-70 is an active-site residue.

Belongs to the thioester dehydratase family. FabA subfamily. Homodimer.

Its subcellular location is the cytoplasm. It catalyses the reaction a (3R)-hydroxyacyl-[ACP] = a (2E)-enoyl-[ACP] + H2O. It carries out the reaction (3R)-hydroxydecanoyl-[ACP] = (2E)-decenoyl-[ACP] + H2O. The catalysed reaction is (2E)-decenoyl-[ACP] = (3Z)-decenoyl-[ACP]. The protein operates within lipid metabolism; fatty acid biosynthesis. Functionally, necessary for the introduction of cis unsaturation into fatty acids. Catalyzes the dehydration of (3R)-3-hydroxydecanoyl-ACP to E-(2)-decenoyl-ACP and then its isomerization to Z-(3)-decenoyl-ACP. Can catalyze the dehydratase reaction for beta-hydroxyacyl-ACPs with saturated chain lengths up to 16:0, being most active on intermediate chain length. This is 3-hydroxydecanoyl-[acyl-carrier-protein] dehydratase from Stutzerimonas stutzeri (strain A1501) (Pseudomonas stutzeri).